The sequence spans 485 residues: Glutamyl-tRNA(Gln) amidotransferase subunit A (485 aa).

Active-site charge relay system residues include Lys79 and Ser154. The active-site Acyl-ester intermediate is Ser178.

The protein belongs to the amidase family. GatA subfamily. As to quaternary structure, heterotrimer of A, B and C subunits.

It carries out the reaction L-glutamyl-tRNA(Gln) + L-glutamine + ATP + H2O = L-glutaminyl-tRNA(Gln) + L-glutamate + ADP + phosphate + H(+). Allows the formation of correctly charged Gln-tRNA(Gln) through the transamidation of misacylated Glu-tRNA(Gln) in organisms which lack glutaminyl-tRNA synthetase. The reaction takes place in the presence of glutamine and ATP through an activated gamma-phospho-Glu-tRNA(Gln). In Staphylococcus aureus (strain MRSA252), this protein is Glutamyl-tRNA(Gln) amidotransferase subunit A.